Here is a 159-residue protein sequence, read N- to C-terminus: Endoribonuclease YbeY (159 aa).

Residues His-125, His-129, and His-135 each contribute to the Zn(2+) site.

This sequence belongs to the endoribonuclease YbeY family. Requires Zn(2+) as cofactor.

The protein resides in the cytoplasm. Functionally, single strand-specific metallo-endoribonuclease involved in late-stage 70S ribosome quality control and in maturation of the 3' terminus of the 16S rRNA. In Limosilactobacillus reuteri (strain DSM 20016) (Lactobacillus reuteri), this protein is Endoribonuclease YbeY.